Reading from the N-terminus, the 1192-residue chain is Probable ATP-dependent RNA helicase kurz (1192 aa).

The segment at 170–214 is disordered; sequence ELQAKRKNPNVISVEEDDEDSSSSDEDDEEAPAQSAPIAIPTPVS. The span at 183-200 shows a compositional bias: acidic residues; it reads VEEDDEDSSSSDEDDEEA. Positions 270 to 436 constitute a Helicase ATP-binding domain; sequence METINENPIV…TRLFKIPPPL (167 aa). 283–290 lines the ATP pocket; the sequence is GETGSGKT. A DEAH box motif is present at residues 379-382; sequence DEAH. The segment at 504–529 is disordered; sequence APTKDVAKNGKVSEEEKEETIDDAAS. Basic and acidic residues predominate over residues 505-517; that stretch reads PTKDVAKNGKVSE. Ser-529 carries the phosphoserine modification. Thr-530 carries the post-translational modification Phosphothreonine. Positions 540 to 746 constitute a Helicase C-terminal domain; that stretch reads DMKRVIRNIR…DLMLQMRCMG (207 aa). Residues 567-583 show a composition bias toward basic and acidic residues; it reads DDYKLPGDDTEADMHEQ. The interval 567-612 is disordered; it reads DDYKLPGDDTEADMHEQPDEDDEQEGLEEDNDDELGLEDESGMGSG. Over residues 584-607 the composition is skewed to acidic residues; the sequence is PDEDDEQEGLEEDNDDELGLEDES.

Belongs to the DEAD box helicase family. DEAH subfamily.

The catalysed reaction is ATP + H2O = ADP + phosphate + H(+). This chain is Probable ATP-dependent RNA helicase kurz (kz), found in Drosophila melanogaster (Fruit fly).